Here is a 946-residue protein sequence, read N- to C-terminus: Bifunctional glutamine synthetase adenylyltransferase/adenylyl-removing enzyme (946 aa).

The tract at residues 1 to 440 (MKPLSSPLQQ…VFNELIGDDE (440 aa)) is adenylyl removase. An adenylyl transferase region spans residues 449–946 (SEQWRELWQD…ASWQKWLVEE (498 aa)).

The protein belongs to the GlnE family. Mg(2+) serves as cofactor.

The enzyme catalyses [glutamine synthetase]-O(4)-(5'-adenylyl)-L-tyrosine + phosphate = [glutamine synthetase]-L-tyrosine + ADP. It carries out the reaction [glutamine synthetase]-L-tyrosine + ATP = [glutamine synthetase]-O(4)-(5'-adenylyl)-L-tyrosine + diphosphate. Involved in the regulation of glutamine synthetase GlnA, a key enzyme in the process to assimilate ammonia. When cellular nitrogen levels are high, the C-terminal adenylyl transferase (AT) inactivates GlnA by covalent transfer of an adenylyl group from ATP to specific tyrosine residue of GlnA, thus reducing its activity. Conversely, when nitrogen levels are low, the N-terminal adenylyl removase (AR) activates GlnA by removing the adenylyl group by phosphorolysis, increasing its activity. The regulatory region of GlnE binds the signal transduction protein PII (GlnB) which indicates the nitrogen status of the cell. The chain is Bifunctional glutamine synthetase adenylyltransferase/adenylyl-removing enzyme from Escherichia coli O8 (strain IAI1).